Here is a 388-residue protein sequence, read N- to C-terminus: Succinyl-diaminopimelate desuccinylase (388 aa).

Histidine 72 is a binding site for Zn(2+). Residue aspartate 74 is part of the active site. Aspartate 105 is a binding site for Zn(2+). Glutamate 139 serves as the catalytic Proton acceptor. Glutamate 140, glutamate 168, and histidine 353 together coordinate Zn(2+).

Belongs to the peptidase M20A family. DapE subfamily. Homodimer. It depends on Zn(2+) as a cofactor. Co(2+) is required as a cofactor.

The enzyme catalyses N-succinyl-(2S,6S)-2,6-diaminopimelate + H2O = (2S,6S)-2,6-diaminopimelate + succinate. Its pathway is amino-acid biosynthesis; L-lysine biosynthesis via DAP pathway; LL-2,6-diaminopimelate from (S)-tetrahydrodipicolinate (succinylase route): step 3/3. Functionally, catalyzes the hydrolysis of N-succinyl-L,L-diaminopimelic acid (SDAP), forming succinate and LL-2,6-diaminopimelate (DAP), an intermediate involved in the bacterial biosynthesis of lysine and meso-diaminopimelic acid, an essential component of bacterial cell walls. This is Succinyl-diaminopimelate desuccinylase from Orientia tsutsugamushi (strain Boryong) (Rickettsia tsutsugamushi).